Reading from the N-terminus, the 121-residue chain is uncharacterized protein (121 aa).

The next 3 membrane-spanning stretches (helical) occupy residues 2-22 (VFVT…IYTI), 42-62 (FICI…YILF), and 89-109 (IFFA…LSIF).

It is found in the membrane. This is an uncharacterized protein from Saccharomyces cerevisiae (strain ATCC 204508 / S288c) (Baker's yeast).